Reading from the N-terminus, the 555-residue chain is Sulfite reductase [ferredoxin] 1 (555 aa).

The 3'-(S-cysteinyl)-tyrosine (Tyr-Cys) cross-link spans 69–161 (YTQREQGYDG…SVGLQTTEAC (93 aa)). The [4Fe-4S] cluster site is built by Cys417, Cys423, Cys463, and Cys467. Cys467 lines the siroheme pocket.

The protein belongs to the nitrite and sulfite reductase 4Fe-4S domain family. In terms of assembly, monomer. Requires siroheme as cofactor. The cofactor is [4Fe-4S] cluster.

It catalyses the reaction hydrogen sulfide + 6 oxidized [2Fe-2S]-[ferredoxin] + 3 H2O = sulfite + 6 reduced [2Fe-2S]-[ferredoxin] + 7 H(+). Functionally, catalyzes the reduction of sulfite to sulfide, a step in the biosynthesis of sulfur-containing amino acids and cofactors. The protein is Sulfite reductase [ferredoxin] 1 (sir1) of Mycolicibacterium paratuberculosis (strain ATCC BAA-968 / K-10) (Mycobacterium paratuberculosis).